The sequence spans 176 residues: Putative metal-dependent hydrolase BLi00869/BLi00870/BL03027 (176 aa).

Zn(2+) is bound by residues His-65, His-158, and His-162.

Belongs to the metal hydrolase YfiT family. In terms of assembly, homodimer. Zn(2+) serves as cofactor.

It localises to the cytoplasm. Its function is as follows. Possible metal-dependent hydrolase. This is Putative metal-dependent hydrolase BLi00869/BLi00870/BL03027 from Bacillus licheniformis (strain ATCC 14580 / DSM 13 / JCM 2505 / CCUG 7422 / NBRC 12200 / NCIMB 9375 / NCTC 10341 / NRRL NRS-1264 / Gibson 46).